Here is a 199-residue protein sequence, read N- to C-terminus: Protein extra-macrochaetae (199 aa).

Residues 23-75 enclose the bHLH domain; it reads RIQRHPTHRGDGENAEMKMYLSKLKDLVPFMPKNRKLTKLEIIQHVIDYICDL. Ser106 is subject to Phosphoserine. The interval 127–199 is disordered; the sequence is RLNAEQPAKV…QNAEKDSRQS (73 aa). Low complexity predominate over residues 161-182; that stretch reads QQHQQQQQLQLQQQQLQSQQQL.

Heterodimer with other HLH proteins.

The protein resides in the nucleus. Participates in sensory organ patterning by antagonizing the neurogenic activity of the Achaete-scute complex (AS-C). It lacks a basic DNA-binding domain but is able to form heterodimers with other HLH proteins, thereby inhibiting DNA binding. May sequester proneural proteins in complexes inefficient for DNA interaction. EMC also affects vein differentiation. Inhibits the activity of AS-C proteins by forming an non-DNA binding heterodimer. The chain is Protein extra-macrochaetae (emc) from Drosophila melanogaster (Fruit fly).